The chain runs to 368 residues: 3-dehydroquinate synthase (368 aa).

NAD(+) contacts are provided by residues 71–76 (DGESFK), 105–109 (GVIGD), 129–130 (TT), K142, K151, and 169–172 (TLRT). Residues E184, H247, and H264 each contribute to the Zn(2+) site.

It belongs to the sugar phosphate cyclases superfamily. Dehydroquinate synthase family. Requires Co(2+) as cofactor. The cofactor is Zn(2+). NAD(+) serves as cofactor.

It is found in the cytoplasm. It carries out the reaction 7-phospho-2-dehydro-3-deoxy-D-arabino-heptonate = 3-dehydroquinate + phosphate. It functions in the pathway metabolic intermediate biosynthesis; chorismate biosynthesis; chorismate from D-erythrose 4-phosphate and phosphoenolpyruvate: step 2/7. Catalyzes the conversion of 3-deoxy-D-arabino-heptulosonate 7-phosphate (DAHP) to dehydroquinate (DHQ). The sequence is that of 3-dehydroquinate synthase from Ralstonia pickettii (strain 12J).